Consider the following 571-residue polypeptide: Urease subunit alpha (571 aa).

One can recognise a Urease domain in the interval 133–571; the sequence is GGIDTHVHFI…LPLTQRYFLF (439 aa). His-138, His-140, and Lys-221 together coordinate Ni(2+). Lys-221 is modified (N6-carboxylysine). His-223 contributes to the substrate binding site. Ni(2+)-binding residues include His-250 and His-276. His-324 acts as the Proton donor in catalysis. Asp-364 provides a ligand contact to Ni(2+).

It belongs to the metallo-dependent hydrolases superfamily. Urease alpha subunit family. In terms of assembly, heterotrimer of UreA (gamma), UreB (beta) and UreC (alpha) subunits. Three heterotrimers associate to form the active enzyme. The cofactor is Ni cation. In terms of processing, carboxylation allows a single lysine to coordinate two nickel ions.

The protein resides in the cytoplasm. It carries out the reaction urea + 2 H2O + H(+) = hydrogencarbonate + 2 NH4(+). It participates in nitrogen metabolism; urea degradation; CO(2) and NH(3) from urea (urease route): step 1/1. The polypeptide is Urease subunit alpha (Staphylococcus aureus (strain USA300)).